A 331-amino-acid polypeptide reads, in one-letter code: Glyoxylate reductase (331 aa).

NADP(+)-binding positions include 158–161 (FGRI), 180–182 (SRT), and 239–241 (TSR). Catalysis depends on residues arginine 241 and glutamate 270. Histidine 288 (proton donor) is an active-site residue. NADP(+) is bound at residue 288 to 290 (HIG).

This sequence belongs to the D-isomer specific 2-hydroxyacid dehydrogenase family. GyaR subfamily. As to quaternary structure, homodimer.

Its subcellular location is the cytoplasm. The catalysed reaction is glycolate + NAD(+) = glyoxylate + NADH + H(+). The polypeptide is Glyoxylate reductase (Thermococcus litoralis (strain ATCC 51850 / DSM 5473 / JCM 8560 / NS-C)).